Reading from the N-terminus, the 1410-residue chain is non-specific serine/threonine protein kinase (1410 aa).

Residues 27–299 (THYVSQLNNS…LLEKYRTIYF (273 aa)) enclose the Protein kinase domain. Residues 33-41 (LNNSRFLKT) and Lys54 contribute to the ATP site. Residue Asp147 is the Proton acceptor of the active site. HEAT repeat units follow at residues 441–478 (TKLDRTLPYLVAALEDDSTRVKVMAMNCVTTLIKEVKH), 485–525 (NIFV…KANL), 556–594 (RKLQQLFEDLTVSILTDPEISVKVALLKNILPLCKYFGR), 596–633 (KTNDVILSHLITYLNDRDPALRMYLVECISGIAILLGP), and 635–672 (TMEQYILPLIIQTITDEEELVVVSVLKNLKDLLKTRFV). WD repeat units lie at residues 1037–1076 (FDGTLLQSEVLLGTKSFMIYGSDQGALTVWDIDRLANEKS), 1187–1226 (ADYGCTISMVLDDKNNLLFFGTVSGIIEMWDARYFVQIRA), and 1230–1273 (GESL…CKHV).

It belongs to the protein kinase superfamily. Ser/Thr protein kinase family. As to quaternary structure, component of the autophagy-specific VPS34 PI3-kinase complex I composed of VPS15, VPS30, VPS34, ATG14 and ATG38; and of the VPS34 PI3-kinase complex II composed of VPS15, VPS30, VPS34 and VPS38. Autophosphorylated.

It localises to the golgi apparatus. The protein resides in the trans-Golgi network membrane. The protein localises to the endosome membrane. The catalysed reaction is L-seryl-[protein] + ATP = O-phospho-L-seryl-[protein] + ADP + H(+). The enzyme catalyses L-threonyl-[protein] + ATP = O-phospho-L-threonyl-[protein] + ADP + H(+). Serine/threonine-protein kinase that plays a role in signaling in modulation of host immune response, intracellular survival and virulence. Required for impediment of phagosomal maturation in THP-1 macrophages. Regulatory subunit of the autophagy-specific VPS34 PI3-kinase complex I essential to recruit the ATG8-phosphatidylinositol conjugate and the ATG12-ATG5 conjugate to the pre-autophagosomal structure. Within the PS34 PI3-kinase complex I, VPS15-mediated phosphorylation of VPS34 may be required for recruiting VPS34 to the membrane but not for activation of its PI3K activity. Is also involved in endosome-to-Golgi retrograde transport as part of the VPS34 PI3-kinase complex II. This second complex is required for the endosome-to-Golgi retrieval of PEP1 and KEX2, and the recruitment of VPS5 and VPS7, two components of the retromer complex, to endosomal membranes (probably through the synthesis of a specific pool of phosphatidylinositol 3-phosphate recruiting the retromer to the endosomes). By regulating VPS34 kinase activity, VPS15 appears to be essential for the efficient delivery of soluble hydrolases to the yeast vacuole. This is non-specific serine/threonine protein kinase from Candida glabrata (strain ATCC 2001 / BCRC 20586 / JCM 3761 / NBRC 0622 / NRRL Y-65 / CBS 138) (Yeast).